Reading from the N-terminus, the 560-residue chain is DNA ligase B (560 aa).

The active-site N6-AMP-lysine intermediate is the lysine 124.

Belongs to the NAD-dependent DNA ligase family. LigB subfamily.

It carries out the reaction NAD(+) + (deoxyribonucleotide)n-3'-hydroxyl + 5'-phospho-(deoxyribonucleotide)m = (deoxyribonucleotide)n+m + AMP + beta-nicotinamide D-nucleotide.. Catalyzes the formation of phosphodiester linkages between 5'-phosphoryl and 3'-hydroxyl groups in double-stranded DNA using NAD as a coenzyme and as the energy source for the reaction. The protein is DNA ligase B of Escherichia coli O157:H7.